The primary structure comprises 92 residues: Small ribosomal subunit protein uS19c (92 aa).

This sequence belongs to the universal ribosomal protein uS19 family.

Its subcellular location is the plastid. The protein resides in the chloroplast. Functionally, protein S19 forms a complex with S13 that binds strongly to the 16S ribosomal RNA. In Panax ginseng (Korean ginseng), this protein is Small ribosomal subunit protein uS19c.